The primary structure comprises 115 residues: Large ribosomal subunit protein bL19 (115 aa).

Belongs to the bacterial ribosomal protein bL19 family.

This protein is located at the 30S-50S ribosomal subunit interface and may play a role in the structure and function of the aminoacyl-tRNA binding site. This chain is Large ribosomal subunit protein bL19, found in Klebsiella pneumoniae (strain 342).